Here is a 470-residue protein sequence, read N- to C-terminus: MKKTKIVCTIGPKTESEEMLSKMLDAGMNVMRLNFSHGDYAEHGQRIQNLRNVMSKTGKKAAILLDTKGPEIRTIKLEGGNDVSLKAGQTFTFTTDKSVVGNNEIVAVTYEGFTSDLSVGNTVLVDDGLIGMEVTAIEGNKVICKVLNNGDLGENKGVNLPGVSIALPALAEKDKQDLIFGCEQGVDFVAASFIRKRSDVVEIREHLKAHGGENIQIISKIENQEGLNNFDEILEASDGIMVARGDLGVEIPVEEVIFAQKMMIEKCIRARKVVITATQMLDSMIKNPRPTRAEAGDVANAILDGTDAVMLSGESAKGKYPLEAVSIMATICERTDRVMNSRLDYNNDSRKLRITEAVCRGAVETAEKLKAPLIVVATQGGKSARAVRKYFPDATILALTTNEVTARQLVLSKGVVSQLVKEINSTDDFYRLGKDVALQSGLAQKGDVVVMVSGALVPSGTTNTASVHVL.

Position 32 (arginine 32) interacts with substrate. Residues asparagine 34, serine 36, aspartate 66, and threonine 67 each contribute to the K(+) site. Residue asparagine 34–histidine 37 coordinates ATP. Residues arginine 73 and lysine 156 each coordinate ATP. Glutamate 222 contacts Mg(2+). Substrate-binding residues include glycine 245, aspartate 246, and threonine 278. Aspartate 246 contributes to the Mg(2+) binding site.

The protein belongs to the pyruvate kinase family. In terms of assembly, homotetramer. Mg(2+) is required as a cofactor. It depends on K(+) as a cofactor.

The enzyme catalyses pyruvate + ATP = phosphoenolpyruvate + ADP + H(+). It participates in carbohydrate degradation; glycolysis; pyruvate from D-glyceraldehyde 3-phosphate: step 5/5. This is Pyruvate kinase I (pykF) from Salmonella typhi.